The sequence spans 154 residues: Superoxide dismutase [Cu-Zn] (154 aa).

Residues His47, His49, and His64 each contribute to the Cu cation site. The cysteines at positions 58 and 147 are disulfide-linked. His64, His72, His81, and Asp84 together coordinate Zn(2+). A Cu cation-binding site is contributed by His121. Residues 125-137 show a composition bias toward basic and acidic residues; that stretch reads DDLGRSEHPESKK. A disordered region spans residues 125-144; it reads DDLGRSEHPESKKTGNAGAR. Residue Arg144 participates in substrate binding.

It belongs to the Cu-Zn superoxide dismutase family. As to quaternary structure, homodimer. Requires Cu cation as cofactor. Zn(2+) serves as cofactor.

The protein resides in the cytoplasm. It carries out the reaction 2 superoxide + 2 H(+) = H2O2 + O2. Functionally, destroys radicals which are normally produced within the cells and which are toxic to biological systems. The polypeptide is Superoxide dismutase [Cu-Zn] (sodC) (Aspergillus oryzae (strain ATCC 42149 / RIB 40) (Yellow koji mold)).